The following is a 1939-amino-acid chain: Myosin-1 (1939 aa).

In terms of domain architecture, Myosin N-terminal SH3-like spans 33–82 (DAKTSVFVAEPKESFVKGTVQSREGGKVTVKTEAGATLTVKEDQVFPMNP). Threonine 64 and threonine 69 each carry phosphothreonine. One can recognise a Myosin motor domain in the interval 86–782 (DKIEDMAMMT…LLGLLEEMRD (697 aa)). An N6,N6,N6-trimethyllysine modification is found at lysine 130. ATP is bound at residue 179–186 (GESGAGKT). Phosphotyrosine is present on tyrosine 389. Threonine 419 bears the Phosphothreonine mark. Position 424 is a phosphotyrosine (tyrosine 424). The actin-binding stretch occupies residues 659 to 681 (LNKLMTNLRSTHPHFVRCIIPNE). Position 757 is a pros-methylhistidine (histidine 757). The actin-binding stretch occupies residues 761–775 (KFGHTKVFFKAGLLG). Positions 785-814 (LAQLITRTQARCRGFLARVEYQKMVERRES) constitute an IQ domain. Residues 843-1939 (LLKSAETEKE…EVHTKIISEE (1097 aa)) are a coiled coil. 2 positions are modified to phosphoserine: serine 1092 and serine 1096. 2 disordered regions span residues 1125–1147 (EIEAERASRAKAEKQRSDLSREL) and 1153–1172 (RLEEAGGATSAQIEMNKKRE). The span at 1128-1147 (AERASRAKAEKQRSDLSREL) shows a compositional bias: basic and acidic residues. 2 positions are modified to phosphoserine: serine 1162 and serine 1237. Phosphothreonine is present on threonine 1241. At serine 1243 the chain carries Phosphoserine. Threonine 1255 carries the phosphothreonine modification. Serine 1261 carries the phosphoserine modification. Phosphothreonine is present on residues threonine 1265 and threonine 1286. Serine 1288, serine 1292, serine 1303, and serine 1306 each carry phosphoserine. Tyrosine 1464 is modified (phosphotyrosine). Residue threonine 1467 is modified to Phosphothreonine. Residue serine 1474 is modified to Phosphoserine. Tyrosine 1492 carries the post-translational modification Phosphotyrosine. Serine 1495 is subject to Phosphoserine. Phosphothreonine is present on threonine 1501. Serine 1514 carries the phosphoserine modification. Position 1517 is a phosphothreonine (threonine 1517). Residues serine 1542, serine 1554, serine 1574, serine 1600, serine 1603, serine 1714, and serine 1726 each carry the phosphoserine modification. Phosphothreonine occurs at positions 1730 and 1736. A Phosphoserine modification is found at serine 1739.

The protein belongs to the TRAFAC class myosin-kinesin ATPase superfamily. Myosin family. As to quaternary structure, muscle myosin is a hexameric protein that consists of 2 heavy chain subunits (MHC), 2 alkali light chain subunits (MLC) and 2 regulatory light chain subunits (MLC-2). Interacts with SLC26A5.

It localises to the cytoplasm. Its subcellular location is the myofibril. Functionally, required for normal hearing. It plays a role in cochlear amplification of auditory stimuli, likely through the positive regulation of prestin (SLC26A5) activity and outer hair cell (OHC) electromotility. This Sus scrofa (Pig) protein is Myosin-1 (MYH1).